We begin with the raw amino-acid sequence, 444 residues long: Trigger factor (444 aa).

The PPIase FKBP-type domain occupies 166–251 (GDQIVIDFKG…VKAVKAPKAA (86 aa)).

It belongs to the FKBP-type PPIase family. Tig subfamily.

It localises to the cytoplasm. The enzyme catalyses [protein]-peptidylproline (omega=180) = [protein]-peptidylproline (omega=0). Its function is as follows. Involved in protein export. Acts as a chaperone by maintaining the newly synthesized protein in an open conformation. Functions as a peptidyl-prolyl cis-trans isomerase. The polypeptide is Trigger factor (Paracoccus denitrificans (strain Pd 1222)).